The primary structure comprises 557 residues: Organic cation/carnitine transporter 2 (557 aa).

Residues 1–20 are Cytoplasmic-facing; the sequence is MRDYDEVTAFLGEWGPFQRL. Residues 21 to 41 form a helical membrane-spanning segment; the sequence is IFFLLSASIIPNGFNGMSIVF. Over 42 to 142 the chain is Extracellular; it reads LAGTPEHRCL…DLVCKDDWKA (101 aa). N-linked (GlcNAc...) asparagine glycosylation is found at Asn57, Asn64, and Asn91. The helical transmembrane segment at 143 to 163 threads the bilayer; that stretch reads PLTTSLFFVGVLMGSFISGQL. The Cytoplasmic segment spans residues 164–172; that stretch reads SDRFGRKNV. A helical membrane pass occupies residues 173–193; that stretch reads LFLTMGMQTGFSFLQLFSVNF. Residues 194 to 197 lie on the Extracellular side of the membrane; the sequence is EMFT. A helical transmembrane segment spans residues 198 to 218; sequence VLFVLVGMGQISNYVAAFVLG. 218 to 225 is a binding site for ATP; it reads GTEILSKS. Residues 219 to 232 lie on the Cytoplasmic side of the membrane; the sequence is TEILSKSIRIIFAT. Residues 233–253 traverse the membrane as a helical segment; sequence LGVCIFYAFGFMVLPLFAYFI. At 254 to 257 the chain is on the extracellular side; the sequence is RDWR. The chain crosses the membrane as a helical span at residues 258-278; sequence MLLLALTVPGVLCGALWWFIP. Topologically, residues 279–341 are cytoplasmic; that stretch reads ESPRWLISQG…YDLVRTRNIR (63 aa). A helical transmembrane segment spans residues 342-362; that stretch reads IITIMSIILWLTISVGYFGLS. Over 363–373 the chain is Extracellular; sequence LDTPNLHGDIY. A helical membrane pass occupies residues 374 to 394; that stretch reads VNCFLLAAVEVPAYVLAWLLL. Over 395 to 406 the chain is Cytoplasmic; that stretch reads QHLPRRYSISAA. A helical transmembrane segment spans residues 407–427; it reads LFLGGSVLLFIQLVPSELFYL. Over 428-430 the chain is Extracellular; it reads STA. A helical membrane pass occupies residues 431 to 451; sequence LVMVGKFGITSAYSMVYVYTA. The Cytoplasmic segment spans residues 452–462; sequence ELYPTVVRNMG. A helical membrane pass occupies residues 463-483; that stretch reads VGVSSTASRLGSILSPYFVYL. Topologically, residues 484–488 are extracellular; sequence GAYDR. Tyr486 carries the phosphotyrosine modification. A helical membrane pass occupies residues 489-509; sequence FLPYILMGSLTILTAILTLFF. Over 510 to 557 the chain is Cytoplasmic; it reads PESFGAPLPDTIDQMLRVKGIKQWQIQSQTRTQKDGGESPTVLKSTAF. The interval 537 to 557 is disordered; the sequence is SQTRTQKDGGESPTVLKSTAF. Position 548 is a phosphoserine (Ser548). Thr550 carries the post-translational modification Phosphothreonine.

This sequence belongs to the major facilitator (TC 2.A.1) superfamily. Organic cation transporter (TC 2.A.1.19) family. In terms of assembly, interacts with PDZK1. As to expression, expressed in the proximal and distal tubules and in the glomeruli in the kidney, in the myocardium, valves, and arterioles in the heart, in the labyrinthine layer of the placenta, and in the cortex, hippocampus, and cerebellum in the brain. Expressed in Sertoli cells in testis.

The protein localises to the cell membrane. It is found in the apical cell membrane. The protein resides in the basal cell membrane. The catalysed reaction is (R)-carnitine(out) + Na(+)(out) = (R)-carnitine(in) + Na(+)(in). It catalyses the reaction O-acetyl-(R)-carnitine(out) + Na(+)(out) = O-acetyl-(R)-carnitine(in) + Na(+)(in). It carries out the reaction O-propanoyl-(R)-carnitine(out) + Na(+)(out) = O-propanoyl-(R)-carnitine(in) + Na(+)(in). The enzyme catalyses glycine betaine(out) + Na(+)(out) = glycine betaine(in) + Na(+)(in). The catalysed reaction is glycine betaine(out) + (R)-carnitine(in) = glycine betaine(in) + (R)-carnitine(out). It catalyses the reaction O-butanoyl-(R)-carnitine(out) + Na(+)(out) = O-butanoyl-(R)-carnitine(in) + Na(+)(in). It carries out the reaction (S)-carnitine(out) + Na(+)(out) = (S)-carnitine(in) + Na(+)(in). The enzyme catalyses an O-acyl-(R)-carnitine(out) + Na(+)(out) = an O-acyl-(R)-carnitine(in) + Na(+)(in). The catalysed reaction is L-glutamyl-L-arginyl-glycyl-L-methionyl-L-threonine(out) + Na(+)(out) = L-glutamyl-L-arginyl-glycyl-L-methionyl-L-threonine(in) + Na(+)(in). It catalyses the reaction N,N-dimethylglycine(out) + Na(+)(out) = N,N-dimethylglycine(in) + Na(+)(in). Inhibited by emetine, quinidine and verapamil. The IC(50) of emetine is 4.2 uM. Not inhibited by valproic acid. Transport of (R)-carnitine is stimulated by cholesterol in the plasma membrane. Its function is as follows. Sodium-ion dependent, high affinity carnitine transporter. Involved in the active cellular uptake of carnitine. Transports one sodium ion with one molecule of carnitine. Also transports organic cations such as tetraethylammonium (TEA) without the involvement of sodium. Also relative uptake activity ratio of carnitine to TEA is 11.3. May also contribute to regulate the transport of organic compounds in testis across the blood-testis-barrier. This Rattus norvegicus (Rat) protein is Organic cation/carnitine transporter 2 (Slc22a5).